A 310-amino-acid polypeptide reads, in one-letter code: MLYQQSYPITNKLLNASAAGSTSTASIIDGGCTLSKPGSGKTKSTTSLPSFNELLTSIPLPNEFKPSTKNTNQAAAATATSPYNYYMGPPAQHRLPTPPPYPMSSPTTATAATPLSQQSPHLQPQQTLQQPQPYHQQYYNYQYAAPPYPHPSQVPPPASYQQRHQQPMYQNTNGVPIIIRPSPGLITPTSTTFDHAKIRSNSTGDLSANSLALSSNNNTQSKDPRRKHVCKVCSRSFTTSGHLARHNRIHTGERKHQCPWPTCEARFARQDNCNQHYKTHTNGKNKRNRQQHRTLEASHVGTKYNTKSLV.

Residues 85 to 131 are disordered; it reads YYMGPPAQHRLPTPPPYPMSSPTTATAATPLSQQSPHLQPQQTLQQP. The span at 104-131 shows a compositional bias: low complexity; sequence SSPTTATAATPLSQQSPHLQPQQTLQQP. C2H2-type zinc fingers lie at residues 228–250 and 256–280; these read HVCK…NRIH and HQCP…YKTH.

Its subcellular location is the nucleus. Functionally, transcriptional repressor that binds NRG1 response elements (NRE) of target promoters. Involved in regulation of chlamydospore formation, hyphal growth, virulence, and stress response. Plays a key role in regulating true hyphal growth, but does not regulate pseudohyphal growth in the same fashion. Directs transcriptional repression of a subset of filament-specific genes such as HWP1, HYR1, ALS8, HWP1, or ECE1; via the TUP1 pathway. Functions with UME6 in a negative feedback loop to control the level and duration of filament-specific gene expression in response to inducing conditions. Plays a key role in biofilm formation and dispersion. Also plays the role of a negative regulator of virulence in mice models. Required for the expression of the cell wall genes RBR1. This is Transcriptional regulator NRG1 (NRG1) from Candida albicans (strain SC5314 / ATCC MYA-2876) (Yeast).